A 543-amino-acid polypeptide reads, in one-letter code: Carboxypeptidase Y homolog A (543 aa).

The first 17 residues, 1 to 17 (MKFLTTGLLATAALAAA), serve as a signal peptide directing secretion. A propeptide spanning residues 18 to 124 (QEQHVLQAED…KLHNYDLRVK (107 aa)) is cleaved from the precursor. Intrachain disulfides connect cysteine 179/cysteine 419, cysteine 313/cysteine 327, cysteine 337/cysteine 360, cysteine 344/cysteine 353, and cysteine 382/cysteine 389. A glycan (N-linked (GlcNAc...) asparagine) is linked at asparagine 210. Residue serine 266 is part of the active site. The active site involves aspartate 458. Asparagine 509 carries an N-linked (GlcNAc...) asparagine glycan. Histidine 520 is an active-site residue.

The protein belongs to the peptidase S10 family.

The protein localises to the vacuole. It catalyses the reaction Release of a C-terminal amino acid with broad specificity.. Its function is as follows. Vacuolar carboxypeptidase involved in degradation of small peptides. Digests preferentially peptides containing an aliphatic or hydrophobic residue in P1' position, as well as methionine, leucine or phenylalanine in P1 position of ester substrate. The polypeptide is Carboxypeptidase Y homolog A (cpyA) (Trichophyton verrucosum (strain HKI 0517)).